The primary structure comprises 187 residues: MMKIIAFVGMPASGKSEASRIAAEMGIPVIIMGDVIRKEVLKRGLEPNDSNTGMVATDLRKHEGMGAVARRCISQIRETGSELVVVDGVRGIAEVECFRKEFGKGFILISIYAPIEVRFSRVQKRGRSDDMNSIEGLRHRDERELSWGMGEAIDASNVEIENNFTLETFRKDVRDVLSNYLEADLEK.

Position 9–16 (9–16 (GMPASGKS)) interacts with ATP.

The protein belongs to the UPF0200 family.

The polypeptide is UPF0200 protein MM_1313 (Methanosarcina mazei (strain ATCC BAA-159 / DSM 3647 / Goe1 / Go1 / JCM 11833 / OCM 88) (Methanosarcina frisia)).